The chain runs to 198 residues: Nucleoid occlusion factor SlmA (198 aa).

Positions 9–70 (RNRREEILQA…SLIEFIEDSL (62 aa)) constitute an HTH tetR-type domain. Residues 33–52 (TTAKLAANVGVSEAALYRHF) constitute a DNA-binding region (H-T-H motif). Residues 113 to 144 (ALMFEQDRLQDRINQLFERIESQLRQVLREHK) are a coiled coil.

Belongs to the nucleoid occlusion factor SlmA family. Homodimer. Interacts with FtsZ.

Its subcellular location is the cytoplasm. The protein localises to the nucleoid. Functionally, required for nucleoid occlusion (NO) phenomenon, which prevents Z-ring formation and cell division over the nucleoid. Acts as a DNA-associated cell division inhibitor that binds simultaneously chromosomal DNA and FtsZ, and disrupts the assembly of FtsZ polymers. SlmA-DNA-binding sequences (SBS) are dispersed on non-Ter regions of the chromosome, preventing FtsZ polymerization at these regions. The chain is Nucleoid occlusion factor SlmA from Pectobacterium carotovorum subsp. carotovorum (strain PC1).